Reading from the N-terminus, the 527-residue chain is MKALFSVLCLVLLVSILRAAVTKPDSGIFTGCLRNRTSLENPITDAIFTSRNTTTFLSSYVSYTKNKRYSSLNYQKLVAIVAAKHVSHVQATVVCAKANGIQLRIRSGGHDYEGLSYTSSVPFVILDMYNLRSITVDVSSKKAWVQAGATLGELYTKINEASQTLAFPAGVCPTVGVGGHITGGGFGNLMRKFGITVDHVIDAQLIGVNGKLLDRATMGEDLFWAIRGGGGASFGVILSWKINLVEVPKILTVFKVSKTLEQGGTDVLYKWQLVATKVPEDLFIRAWPQIVKGTKLGERTIGVVFFAQFLGPTDKLMEIMSQSLPELGLRREDCHEMSWFNTTLFWANYPVGTPTRVLLDRPSTPGEFFKSKSDNIKKPIPKEGLEKIWKTMLKFNFVWIEFNPYGGVMDRIPATATAFPHRKGNLFNLQYSTIWLDAKETENKLTMMKELYEVAGPYVSSNPREALFNFRDFDIGINPSGLNVDEAKIYGYKYFLGNLKRLMDVKAKCDPDNFFKNEQSILPARVM.

An N-terminal signal peptide occupies residues 1-19 (MKALFSVLCLVLLVSILRA). Cys32 and Cys95 form a disulfide bridge. 2 N-linked (GlcNAc...) asparagine glycosylation sites follow: Asn35 and Asn52. The FAD-binding PCMH-type domain occupies 73–247 (NYQKLVAIVA…LSWKINLVEV (175 aa)). Residues 110-172 (HDYEGLSYTS…QTLAFPAGVC (63 aa)) constitute a cross-link (6-(S-cysteinyl)-8alpha-(pros-histidyl)-FAD (His-Cys)). Residue Asn341 is glycosylated (N-linked (GlcNAc...) asparagine).

It belongs to the oxygen-dependent FAD-linked oxidoreductase family. FAD serves as cofactor. Post-translationally, the FAD cofactor is bound via a bicovalent 6-S-cysteinyl, 8alpha-N1-histidyl FAD linkage.

Its subcellular location is the secreted. The protein resides in the cell wall. Its function is as follows. Probable flavin-dependent oxidoreductase. The sequence is that of Berberine bridge enzyme-like 5 from Arabidopsis thaliana (Mouse-ear cress).